Here is a 341-residue protein sequence, read N- to C-terminus: DNA-directed RNA polymerase subunit alpha (341 aa).

The interval 1–233 is alpha N-terminal domain (alpha-NTD); it reads MVREEVPVST…DLFIPFLHAE (233 aa). Positions 266–341 are alpha C-terminal domain (alpha-CTD); sequence IILKRIFIDQ…LKNSNQFESR (76 aa).

This sequence belongs to the RNA polymerase alpha chain family. In plastids the minimal PEP RNA polymerase catalytic core is composed of four subunits: alpha, beta, beta', and beta''. When a (nuclear-encoded) sigma factor is associated with the core the holoenzyme is formed, which can initiate transcription.

The protein resides in the plastid. It is found in the chloroplast. It catalyses the reaction RNA(n) + a ribonucleoside 5'-triphosphate = RNA(n+1) + diphosphate. Functionally, DNA-dependent RNA polymerase catalyzes the transcription of DNA into RNA using the four ribonucleoside triphosphates as substrates. This Nymphaea alba (White water-lily) protein is DNA-directed RNA polymerase subunit alpha.